Reading from the N-terminus, the 547-residue chain is Glucose-6-phosphate isomerase (547 aa).

The Proton donor role is filled by glutamate 356. Residues histidine 387 and lysine 508 contribute to the active site.

This sequence belongs to the GPI family.

Its subcellular location is the cytoplasm. It carries out the reaction alpha-D-glucose 6-phosphate = beta-D-fructose 6-phosphate. Its pathway is carbohydrate biosynthesis; gluconeogenesis. The protein operates within carbohydrate degradation; glycolysis; D-glyceraldehyde 3-phosphate and glycerone phosphate from D-glucose: step 2/4. In terms of biological role, catalyzes the reversible isomerization of glucose-6-phosphate to fructose-6-phosphate. The polypeptide is Glucose-6-phosphate isomerase (Cupriavidus taiwanensis (strain DSM 17343 / BCRC 17206 / CCUG 44338 / CIP 107171 / LMG 19424 / R1) (Ralstonia taiwanensis (strain LMG 19424))).